The following is a 233-amino-acid chain: 7-cyano-7-deazaguanine synthase (233 aa).

Leu-13–Met-23 provides a ligand contact to ATP. The Zn(2+) site is built by Cys-197, Cys-207, Cys-210, and Cys-213.

This sequence belongs to the QueC family. Zn(2+) is required as a cofactor.

The enzyme catalyses 7-carboxy-7-deazaguanine + NH4(+) + ATP = 7-cyano-7-deazaguanine + ADP + phosphate + H2O + H(+). The protein operates within purine metabolism; 7-cyano-7-deazaguanine biosynthesis. In terms of biological role, catalyzes the ATP-dependent conversion of 7-carboxy-7-deazaguanine (CDG) to 7-cyano-7-deazaguanine (preQ(0)). The sequence is that of 7-cyano-7-deazaguanine synthase from Desulfatibacillum aliphaticivorans.